Here is a 61-residue protein sequence, read N- to C-terminus: Small ribosomal subunit protein uS14 (61 aa).

Positions 24, 27, 40, and 43 each coordinate Zn(2+).

Belongs to the universal ribosomal protein uS14 family. Zinc-binding uS14 subfamily. Part of the 30S ribosomal subunit. Contacts proteins S3 and S10. It depends on Zn(2+) as a cofactor.

Binds 16S rRNA, required for the assembly of 30S particles and may also be responsible for determining the conformation of the 16S rRNA at the A site. This chain is Small ribosomal subunit protein uS14, found in Clostridium perfringens (strain ATCC 13124 / DSM 756 / JCM 1290 / NCIMB 6125 / NCTC 8237 / Type A).